Consider the following 93-residue polypeptide: MARLLALVIGYALSSFVLKLFTVLGVGIFTYVGLTALVDGFLNLLQPMLTGLPSYILDILAIAGVPEALSIVGSALLTRASINSAKAFVGVLT.

2 helical membrane passes run 25 to 45 (GVGI…LNLL) and 56 to 76 (ILDI…GSAL).

This sequence belongs to the inovirus G6P protein family. As to quaternary structure, interacts with G3P; this interaction is required for proper integration of G3P and G6P into the virion.

It localises to the virion. The protein localises to the host membrane. Plays essential roles both in the entry of the viral genome into the bacterial host and in budding process. The formation of the G3P-G6P complex termed adsorption complex is essential for correct termination of filamentous phage assembly. The polypeptide is Head virion protein G6P (VI) (Pseudomonas phage Pf3 (Bacteriophage Pf3)).